The primary structure comprises 152 residues: MQARRKTRLYIVLAVLAGLGLTVSLTLYALSSNIDLFYTPGEIIYGKTETRALPHTGQRLRVGGYVQPGSLQRDPQTLDVRFKLYDARGVVDVSYKGILPDLFREGQGVVAQGVLDGERHITAQQVLAKHDENYTPPEVKNAMTPEKTGAQP.

At 1 to 8 (MQARRKTR) the chain is on the cytoplasmic side. Residues 9–29 (LYIVLAVLAGLGLTVSLTLYA) form a helical; Signal-anchor for type II membrane protein membrane-spanning segment. Residues 30 to 152 (LSSNIDLFYT…MTPEKTGAQP (123 aa)) lie on the Periplasmic side of the membrane. Heme contacts are provided by H130 and Y134. Positions 133 to 152 (NYTPPEVKNAMTPEKTGAQP) are disordered.

Belongs to the CcmE/CycJ family.

It is found in the cell inner membrane. Its function is as follows. Heme chaperone required for the biogenesis of c-type cytochromes. Transiently binds heme delivered by CcmC and transfers the heme to apo-cytochromes in a process facilitated by CcmF and CcmH. The protein is Cytochrome c-type biogenesis protein CcmE of Klebsiella pneumoniae (strain 342).